Reading from the N-terminus, the 905-residue chain is Gamma-tubulin complex component 2 (905 aa).

Y83 bears the Phosphotyrosine mark. The disordered stretch occupies residues 877-905 (AERSQKAAPQVPVPRGPSAPAPRVAIPAQ). Over residues 887 to 896 (VPVPRGPSAP) the composition is skewed to pro residues.

This sequence belongs to the TUBGCP family. Component of the gamma-tubulin ring complex (gTuRC) consisting of TUBGCP2, TUBGCP3, TUBGCP4, TUBGCP5 and TUBGCP6 and gamma-tubulin TUBG1 or TUBG2. TUBGCP2, TUBGCP3, TUBGCP4, TUBGCP5 and TUBGCP6 assemble in a 5:5:2:1:1 stoichiometry; each is associated with a gamma-tubulin, thereby arranging 14 gamma-tubulins in a helical manner. Gamma-tubulin at the first position is blocked by TUBGCP3 at the last position, allowing 13 protafilaments to grow into a microtubule. The gTuRC (via TUBGCP3 and TUBGCP6) interacts with ACTB and MZT1; the interactions form a luminal bridge that stabilizes the initial structure during complex assembly. The gTuRC (via TUBGCP2) interacts with MZT2A/MZT2B and CDK5RAP2 (via CM1 motif); the interactions play a role in gTuRC activation. Interacts with ATF5; the ATF5:PCNT:polyglutamylated tubulin (PGT) tripartite unites the mother centriole and the pericentriolar material (PCM) in the centrosome.

The protein resides in the cytoplasm. Its subcellular location is the cytoskeleton. The protein localises to the microtubule organizing center. It is found in the centrosome. Functionally, component of the gamma-tubulin ring complex (gTuRC) which mediates microtubule nucleation. The gTuRC regulates the minus-end nucleation of alpha-beta tubulin heterodimers that grow into microtubule protafilaments, a critical step in centrosome duplication and spindle formation. Plays a role in neuronal migration. This is Gamma-tubulin complex component 2 (Tubgcp2) from Mus musculus (Mouse).